Here is a 201-residue protein sequence, read N- to C-terminus: Retinol-binding protein 4 (201 aa).

An N-terminal signal peptide occupies residues 1–18 (MEWVWALVLLAALGSAQA). Cystine bridges form between Cys22-Cys178, Cys88-Cys192, and Cys138-Cys147. Gln116 is a binding site for substrate. Position 139 is an omega-N-methylarginine (Arg139).

This sequence belongs to the calycin superfamily. Lipocalin family. In terms of assembly, interacts with TTR. Interaction with TTR prevents its loss by filtration through the kidney glomeruli. Interacts with STRA6.

It is found in the secreted. Its function is as follows. Retinol-binding protein that mediates retinol transport in blood plasma. Delivers retinol from the liver stores to the peripheral tissues. Transfers the bound all-trans retinol to STRA6, that then facilitates retinol transport across the cell membrane. The protein is Retinol-binding protein 4 (RBP4) of Sus scrofa (Pig).